Consider the following 953-residue polypeptide: Translation initiation factor IF-2 (953 aa).

2 disordered regions span residues 48-212 and 279-367; these read SSFS…KIDF and TKLK…FHEL. 3 stretches are compositionally biased toward basic and acidic residues: residues 80–89, 98–111, and 140–188; these read TGSEHVEKTQ, FKAE…EQAA, and QGDK…ENHK. Polar residues-rich tracts occupy residues 191 to 207 and 282 to 291; these read RFTN…QSKS and KSSNISAKST. Over residues 300–317 the composition is skewed to basic and acidic residues; sequence ARPEKNRELTHHSQEGQK. The span at 322–338 shows a compositional bias: low complexity; sequence SWNSQNQVRNQKNSNWN. Residues 339 to 348 are compositionally biased toward basic residues; sequence KNKKTKKGKN. In terms of domain architecture, tr-type G spans 454 to 623; sequence ERAPVVTIMG…LLVAEVEELK (170 aa). Residues 463 to 470 form a G1 region; that stretch reads GHVDHGKT. 463–470 is a binding site for GTP; sequence GHVDHGKT. The interval 488-492 is G2; the sequence is GITQH. A G3 region spans residues 509–512; the sequence is DTPG. GTP is bound by residues 509 to 513 and 563 to 566; these read DTPGH and NKID. The tract at residues 563 to 566 is G4; that stretch reads NKID. Positions 599 to 601 are G5; the sequence is SAK.

Belongs to the TRAFAC class translation factor GTPase superfamily. Classic translation factor GTPase family. IF-2 subfamily.

The protein resides in the cytoplasm. Its function is as follows. One of the essential components for the initiation of protein synthesis. Protects formylmethionyl-tRNA from spontaneous hydrolysis and promotes its binding to the 30S ribosomal subunits. Also involved in the hydrolysis of GTP during the formation of the 70S ribosomal complex. The protein is Translation initiation factor IF-2 of Streptococcus pyogenes serotype M3 (strain ATCC BAA-595 / MGAS315).